The chain runs to 260 residues: Acetylglutamate kinase (260 aa).

Residues 46 to 47 (GG), R68, and N160 contribute to the substrate site.

Belongs to the acetylglutamate kinase family. ArgB subfamily.

The protein resides in the cytoplasm. It catalyses the reaction N-acetyl-L-glutamate + ATP = N-acetyl-L-glutamyl 5-phosphate + ADP. The protein operates within amino-acid biosynthesis; L-arginine biosynthesis; N(2)-acetyl-L-ornithine from L-glutamate: step 2/4. Catalyzes the ATP-dependent phosphorylation of N-acetyl-L-glutamate. In Shewanella sp. (strain MR-4), this protein is Acetylglutamate kinase.